The primary structure comprises 500 residues: Cysteine--tRNA ligase (500 aa).

Cysteine 29 is a binding site for Zn(2+). The 'HIGH' region signature appears at valine 31 to histidine 41. Positions 213, 238, and 242 each coordinate Zn(2+). Positions lysine 270–serine 274 match the 'KMSKS' region motif. Lysine 273 contacts ATP.

The protein belongs to the class-I aminoacyl-tRNA synthetase family. Monomer. Requires Zn(2+) as cofactor.

The protein localises to the cytoplasm. The enzyme catalyses tRNA(Cys) + L-cysteine + ATP = L-cysteinyl-tRNA(Cys) + AMP + diphosphate. The sequence is that of Cysteine--tRNA ligase from Prochlorococcus marinus (strain NATL2A).